Reading from the N-terminus, the 311-residue chain is tRNA-cytidine(32) 2-sulfurtransferase (311 aa).

The short motif at 47–52 (SGGKDS) is the PP-loop motif element. 3 residues coordinate [4Fe-4S] cluster: Cys122, Cys125, and Cys213.

It belongs to the TtcA family. As to quaternary structure, homodimer. Mg(2+) is required as a cofactor. It depends on [4Fe-4S] cluster as a cofactor.

The protein localises to the cytoplasm. It catalyses the reaction cytidine(32) in tRNA + S-sulfanyl-L-cysteinyl-[cysteine desulfurase] + AH2 + ATP = 2-thiocytidine(32) in tRNA + L-cysteinyl-[cysteine desulfurase] + A + AMP + diphosphate + H(+). The protein operates within tRNA modification. In terms of biological role, catalyzes the ATP-dependent 2-thiolation of cytidine in position 32 of tRNA, to form 2-thiocytidine (s(2)C32). The sulfur atoms are provided by the cysteine/cysteine desulfurase (IscS) system. The protein is tRNA-cytidine(32) 2-sulfurtransferase of Shigella boydii serotype 18 (strain CDC 3083-94 / BS512).